A 268-amino-acid polypeptide reads, in one-letter code: E3 ubiquitin-protein ligase IAP-3 (268 aa).

2 BIR repeats span residues Lys-18–Val-84 and Glu-111–Val-178. The Zn(2+) site is built by Cys-148, Cys-151, His-168, and Cys-175. Residues Cys-221–Arg-256 form an RING-type zinc finger.

Belongs to the IAP family. Post-translationally, auto-ubiquitinated.

It catalyses the reaction S-ubiquitinyl-[E2 ubiquitin-conjugating enzyme]-L-cysteine + [acceptor protein]-L-lysine = [E2 ubiquitin-conjugating enzyme]-L-cysteine + N(6)-ubiquitinyl-[acceptor protein]-L-lysine.. RING-finger E3 ubiquitin ligase required to prevent cellular apoptosis in infected cells. Ubiquitinates and subsequently targets host pro-apoptotic cellular proteins such as HID for degradation by the proteasome. The sequence is that of E3 ubiquitin-protein ligase IAP-3 (IAP3) from Orgyia pseudotsugata multicapsid polyhedrosis virus (OpMNPV).